Here is a 286-residue protein sequence, read N- to C-terminus: MTELTEGNTSKFAKISEKDLSDFLIHYNEAGEGEAVIMLHGGGPGAGGWSNYYRNIGPFVDAGYRVILKDSPGFNKSDVVVMDEQRGLVNARAVKGLMDALGIERAHLVGNSMGGATALNFAIEYPERLGKMILMGPGGLGASHFAPMPMEGIKLLFKLYAEPSYETLRQMIQVFLYDQTNITEELLQGRWEAIQRNPEHLKNFLVSAQRAPLSSWDVSPRLGEIKAKTLVTWGRDDRFVPLDHGLKLVWGIGDARLHVFSQCGHWAQWEKADEFNRLAIDFLRQR.

Substrate is bound by residues 42–43 (GG), Asn-51, Asn-111, Thr-180, and Arg-190. The active-site Proton acceptor is the His-265. Position 266 (Trp-266) interacts with substrate.

Belongs to the AB hydrolase superfamily. BphD family. As to quaternary structure, homodimer.

The enzyme catalyses 2,6-dioxo-6-phenylhexa-3-enoate + H2O = 2-oxopent-4-enoate + benzoate + H(+). It functions in the pathway xenobiotic degradation; biphenyl degradation; 2-hydroxy-2,4-pentadienoate and benzoate from biphenyl: step 4/4. Its function is as follows. Catalyzes an unusual C-C bond hydrolysis of 2-hydroxy-6-oxo-6-phenylhexa-2,4-dienoic acid (HOPDA) to produce benzoic acid and 2-hydroxy-2,4-pentadienoic acid (HPD). The polypeptide is 2-hydroxy-6-oxo-6-phenylhexa-2,4-dienoate hydrolase (Comamonas testosteroni (Pseudomonas testosteroni)).